The sequence spans 172 residues: MVWCLADLRAYVLVLLVISGLYQGSDQLIPEKCGEDCTPGWDCHFNSYYKYIPNAKSWTDAEFYCQKLYPGAHLASIHSEDENDFLTEITFKNNSNYPVVWVGGSDCYKDRSFVWTDGSQWDYQKWRQWEPSNTGGREPCIDFNFVTPGLWNDEHCDQKFPFICKYTTPCRY.

Positions 1–20 are cleaved as a signal peptide; the sequence is MVWCLADLRAYVLVLLVISG. The C-type lectin domain maps to 36-172; sequence DCTPGWDCHF…ICKYTTPCRY (137 aa). Cystine bridges form between C65/C164 and C140/C156. N-linked (GlcNAc...) asparagine glycosylation is present at N93.

Heterodimer. As to expression, anterior part of oviduct.

It is found in the secreted. Its function is as follows. May be involved in protection of eggs and embryos against microorganisms. Calcium-dependent lectin with specificity to D-glucose and D-glucosamine. Can agglutinate microorganisms in vivo. This Pleurodeles waltl (Iberian ribbed newt) protein is Lectin (LEC).